Here is a 244-residue protein sequence, read N- to C-terminus: tRNA (guanine-N(1)-)-methyltransferase (244 aa).

S-adenosyl-L-methionine-binding positions include G110 and 129–134; that span reads IGDYIL.

The protein belongs to the RNA methyltransferase TrmD family. In terms of assembly, homodimer.

It localises to the cytoplasm. The catalysed reaction is guanosine(37) in tRNA + S-adenosyl-L-methionine = N(1)-methylguanosine(37) in tRNA + S-adenosyl-L-homocysteine + H(+). Functionally, specifically methylates guanosine-37 in various tRNAs. The chain is tRNA (guanine-N(1)-)-methyltransferase from Syntrophomonas wolfei subsp. wolfei (strain DSM 2245B / Goettingen).